We begin with the raw amino-acid sequence, 75 residues long: UPF0352 protein VIBHAR_03027 (75 aa).

This sequence belongs to the UPF0352 family.

The sequence is that of UPF0352 protein VIBHAR_03027 from Vibrio campbellii (strain ATCC BAA-1116).